A 418-amino-acid chain; its full sequence is MTLLALGINHKTAPVSLRERVSFSPDKLDQALDSLLAQPMVQGGVVLSTCNRTELYLSVEERDDLQEALIRWLCDYHNLNEDDLRNSLYWHQDNDAVSHLMRVASGLDSLVLGEPQILGQVKKAFADSQKGHMKASELERMFQKSFSVAKRVRTETDIGASAVSVAFAACTLARQIFESLSTVTVLLVGAGETIELVARHLREHKVQKMIIANRTRERAQILADEVGAEVIALSDIDERLREADIIISSTASPLPIIGKGMVERALKSRRNQPMLLVDIAVPRDVEPEVGKLANAYLYSVDDLQSIISHNLAQRKAAAVEAETIVAQEASEFMAWLRAQSASETIRDYRSQAEQVRDELTAKALAALEQGGDAQTIMQDLAWKLTNRLIHAPTKSLQQAARDGDNERLNILRDSLGLE.

Substrate-binding positions include 49–52 (TCNR), Ser109, 114–116 (EPQ), and Gln120. Residue Cys50 is the Nucleophile of the active site. NADP(+) is bound at residue 189–194 (GAGETI).

This sequence belongs to the glutamyl-tRNA reductase family. As to quaternary structure, homodimer.

It catalyses the reaction (S)-4-amino-5-oxopentanoate + tRNA(Glu) + NADP(+) = L-glutamyl-tRNA(Glu) + NADPH + H(+). Its pathway is porphyrin-containing compound metabolism; protoporphyrin-IX biosynthesis; 5-aminolevulinate from L-glutamyl-tRNA(Glu): step 1/2. Functionally, catalyzes the NADPH-dependent reduction of glutamyl-tRNA(Glu) to glutamate 1-semialdehyde (GSA). The sequence is that of Glutamyl-tRNA reductase from Escherichia coli O45:K1 (strain S88 / ExPEC).